Reading from the N-terminus, the 465-residue chain is Na(+)-translocating NADH-quinone reductase subunit A (465 aa).

The protein belongs to the NqrA family. Composed of six subunits; NqrA, NqrB, NqrC, NqrD, NqrE and NqrF.

The catalysed reaction is a ubiquinone + n Na(+)(in) + NADH + H(+) = a ubiquinol + n Na(+)(out) + NAD(+). NQR complex catalyzes the reduction of ubiquinone-1 to ubiquinol by two successive reactions, coupled with the transport of Na(+) ions from the cytoplasm to the periplasm. NqrA to NqrE are probably involved in the second step, the conversion of ubisemiquinone to ubiquinol. This is Na(+)-translocating NADH-quinone reductase subunit A from Chlamydia trachomatis serovar L2 (strain ATCC VR-902B / DSM 19102 / 434/Bu).